Reading from the N-terminus, the 139-residue chain is Nucleoside diphosphate kinase (139 aa).

ATP-binding residues include lysine 9, phenylalanine 57, arginine 85, threonine 91, arginine 102, and asparagine 112. Residue histidine 115 is the Pros-phosphohistidine intermediate of the active site.

The protein belongs to the NDK family. As to quaternary structure, homotetramer. The cofactor is Mg(2+).

It is found in the cytoplasm. It carries out the reaction a 2'-deoxyribonucleoside 5'-diphosphate + ATP = a 2'-deoxyribonucleoside 5'-triphosphate + ADP. The enzyme catalyses a ribonucleoside 5'-diphosphate + ATP = a ribonucleoside 5'-triphosphate + ADP. Major role in the synthesis of nucleoside triphosphates other than ATP. The ATP gamma phosphate is transferred to the NDP beta phosphate via a ping-pong mechanism, using a phosphorylated active-site intermediate. The sequence is that of Nucleoside diphosphate kinase from Exiguobacterium sp. (strain ATCC BAA-1283 / AT1b).